The sequence spans 300 residues: Tyrosine recombinase XerC (300 aa).

One can recognise a Core-binding (CB) domain in the interval 1 to 86 (MESVLDAFDQ…AVKTFTAWAV (86 aa)). In terms of domain architecture, Tyr recombinase spans 107-294 (TLPAVLRQDQ…TVARLRAVHD (188 aa)). Residues R151, K175, H246, R249, and H272 contribute to the active site. Y281 acts as the O-(3'-phospho-DNA)-tyrosine intermediate in catalysis.

It belongs to the 'phage' integrase family. XerC subfamily. As to quaternary structure, forms a cyclic heterotetrameric complex composed of two molecules of XerC and two molecules of XerD.

It localises to the cytoplasm. Its function is as follows. Site-specific tyrosine recombinase, which acts by catalyzing the cutting and rejoining of the recombining DNA molecules. The XerC-XerD complex is essential to convert dimers of the bacterial chromosome into monomers to permit their segregation at cell division. It also contributes to the segregational stability of plasmids. The sequence is that of Tyrosine recombinase XerC from Mycobacterium sp. (strain KMS).